Here is a 68-residue protein sequence, read N- to C-terminus: Intracellular calcium channel modulator CCP-Ts (68 aa).

A signal peptide spans 1 to 23; sequence MNPKLLIVIGLLLATGVCSFAKA. Cystine bridges form between Cys33–Cys47, Cys40–Cys53, and Cys46–Cys62.

The protein belongs to the scorpion calcin-like family. As to expression, expressed by the venom gland. In intravenously injected mice, the labeled toxin has preference for heart, liver and lungs.

It localises to the secreted. Its subcellular location is the nucleus. Its function is as follows. Cell penetrating peptide (CPP) that increases intracellular calcium release through the activation of nuclear inositol 1,4,5-trisphosphate receptors (ITPR) of cardiomyocytes, thereby causing an increase in the contraction frequency of these cells. In vivo, this toxin is not lethal to mice, hovewer anti-CPP serum reduces venom lethality, suggesting that this toxin is lethal when it acts in synergy with other venom components. The polypeptide is Intracellular calcium channel modulator CCP-Ts (Tityus serrulatus (Brazilian scorpion)).